Reading from the N-terminus, the 180-residue chain is MDLRTALQTFESTRRLLELCSNRTSFLWRWLFGTPLSRLVRQVKLEYEKDFERILDQCPGVFESLELGYHKVFEEKIVKELDFSSPGRAVAAVAFASYLLDRWNTRTHLSPGYQMDYISLNLWKFWLRRRVYNYSRGLPQLGPAAPLARQGSQQEEQQQRQEEEQVQEEMRSGLDPPTEN.

Positions 142–180 (GPAAPLARQGSQQEEQQQRQEEEQVQEEMRSGLDPPTEN) are disordered. The span at 157-172 (QQQRQEEEQVQEEMRS) shows a compositional bias: basic and acidic residues.

Belongs to the adenoviridae E1B 19 kDa protein family.

The protein is E1B protein, small T-antigen of Simian adenovirus serotype 7 (SAdV-7).